Consider the following 1138-residue polypeptide: Phosphatidylserine decarboxylase proenzyme 2 (1138 aa).

A C2 1 domain is found at 1–122 (MRIIKGRKRG…SNSGLSSHSH (122 aa)). Disordered stretches follow at residues 90 to 166 (TGAP…PGST), 269 to 305 (MRSS…DTDL), and 413 to 448 (AVSE…REDS). Residues 98–121 (SRPRTTTANTSSSTLSNSGLSSHS) show a composition bias toward low complexity. A compositionally biased stretch (polar residues) spans 125–135 (RNLNVTSKGNQ). Low complexity predominate over residues 136-166 (TSTSINSVSSSATPAPSHSSSSLSTTGPGST). Positions 293 to 305 (EIRREKPYSDTDL) are enriched in basic and acidic residues. Residues 421-448 (SVDDEESENQQESDEEFDIYNEDEREDS) are compositionally biased toward acidic residues. In terms of domain architecture, C2 2 spans 478–600 (RRAKSNFFIS…QQQQHENEWI (123 aa)). Positions 571, 574, and 577 each coordinate Ca(2+). Catalysis depends on charge relay system; for autoendoproteolytic cleavage activity residues D899, H956, and S1043. The active-site Schiff-base intermediate with substrate; via pyruvic acid; for decarboxylase activity is the S1043. At S1043 the chain carries Pyruvic acid (Ser); by autocatalysis.

Belongs to the phosphatidylserine decarboxylase family. PSD-B subfamily. Eukaryotic type II sub-subfamily. In terms of assembly, heterodimer of a large membrane-associated beta subunit and a small pyruvoyl-containing alpha subunit. Interacts with pstB2/PDR17. This interaction may be a means to structurally tether the donor membrane (ER) harboring PstB2/PDR17 to acceptor membranes (Golgi/endosomes) harboring PSD2 during PtdSer transport to the site of PtdEtn synthesis. Requires pyruvate as cofactor. The cofactor is Ca(2+). In terms of processing, is synthesized initially as an inactive proenzyme. Formation of the active enzyme involves a self-maturation process in which the active site pyruvoyl group is generated from an internal serine residue via an autocatalytic post-translational modification. Two non-identical subunits are generated from the proenzyme in this reaction, and the pyruvate is formed at the N-terminus of the alpha chain, which is derived from the carboxyl end of the proenzyme. The autoendoproteolytic cleavage occurs by a canonical serine protease mechanism, in which the side chain hydroxyl group of the serine supplies its oxygen atom to form the C-terminus of the beta chain, while the remainder of the serine residue undergoes an oxidative deamination to produce ammonia and the pyruvoyl prosthetic group on the alpha chain. During this reaction, the Ser that is part of the protease active site of the proenzyme becomes the pyruvoyl prosthetic group, which constitutes an essential element of the active site of the mature decarboxylase.

It localises to the golgi apparatus membrane. It is found in the endosome membrane. It carries out the reaction a 1,2-diacyl-sn-glycero-3-phospho-L-serine + H(+) = a 1,2-diacyl-sn-glycero-3-phosphoethanolamine + CO2. It participates in phospholipid metabolism; phosphatidylethanolamine biosynthesis; phosphatidylethanolamine from CDP-diacylglycerol: step 2/2. Functionally, catalyzes the formation of phosphatidylethanolamine (PtdEtn) from phosphatidylserine (PtdSer). Plays a central role in phospholipid metabolism and in the interorganelle trafficking of phosphatidylserine. Phosphatidylethanolamine produced by PSD2 is insufficient to completely provide the PtdEtn pool required by mitochondria under respiratory conditions. PSD2 is also involved in the PtdSer transport step to the site of PtdEtn synthesis on the Golgi/endosome membranes. Required for normal heavy metal resistance. The chain is Phosphatidylserine decarboxylase proenzyme 2 from Saccharomyces cerevisiae (strain ATCC 204508 / S288c) (Baker's yeast).